Consider the following 245-residue polypeptide: 1-(5-phosphoribosyl)-5-[(5-phosphoribosylamino)methylideneamino] imidazole-4-carboxamide isomerase (245 aa).

Aspartate 7 functions as the Proton acceptor in the catalytic mechanism. The active-site Proton donor is aspartate 129.

The protein belongs to the HisA/HisF family.

The protein resides in the cytoplasm. The catalysed reaction is 1-(5-phospho-beta-D-ribosyl)-5-[(5-phospho-beta-D-ribosylamino)methylideneamino]imidazole-4-carboxamide = 5-[(5-phospho-1-deoxy-D-ribulos-1-ylimino)methylamino]-1-(5-phospho-beta-D-ribosyl)imidazole-4-carboxamide. Its pathway is amino-acid biosynthesis; L-histidine biosynthesis; L-histidine from 5-phospho-alpha-D-ribose 1-diphosphate: step 4/9. This chain is 1-(5-phosphoribosyl)-5-[(5-phosphoribosylamino)methylideneamino] imidazole-4-carboxamide isomerase, found in Buchnera aphidicola subsp. Cinara cedri (strain Cc).